A 260-amino-acid polypeptide reads, in one-letter code: Alpha carbonic anhydrase 6 (260 aa).

A signal peptide spans methionine 1 to alanine 28. The Alpha-carbonic anhydrase domain occupies proline 35–methionine 260. Cysteine 60 and cysteine 215 are joined by a disulfide. Histidine 100 serves as the catalytic Proton acceptor. 2 residues coordinate Zn(2+): histidine 126 and histidine 128. Asparagine 136 is a glycosylation site (N-linked (GlcNAc...) asparagine). Position 145 (histidine 145) interacts with Zn(2+). Threonine 211 to isoleucine 212 contacts substrate.

The protein belongs to the alpha-class carbonic anhydrase family. The cofactor is Zn(2+). Post-translationally, N-glycosylated.

It localises to the plastid. The protein localises to the chloroplast stroma. The enzyme catalyses hydrogencarbonate + H(+) = CO2 + H2O. Functionally, reversible hydration of carbon dioxide. The chain is Alpha carbonic anhydrase 6 (ACA6) from Arabidopsis thaliana (Mouse-ear cress).